A 358-amino-acid chain; its full sequence is MLLAQQLNLYILKGEIIMKKIKIAIVFGGQSTEHEVSRNSVTSILKNINRDKYEICPIGITKEGKWFQYTGDINNIKNGQWEKDNKNKLENGYNVLFNKEVELVFPVLHGLYGEDGTIQGLCKLVGLPCVGPGVLSSALCMDKIYTKYVLENFKFKQANYVVVNKFEYEKNKEEIIKEVEKLQYDVFIKPANSGSSVGITKAHNKEELLKGLEEAFIHDKNVLVEEAINAREIEVAVLGNDDPKAAVPGEIIPAKEFYDYEAKYQNENSELLIPANIDNIKQEEIKELAIKIYKLLGCSGLARVDFLMDKESNEVYFNEVNTLPGFTKISMYPKLWEASGKSYSALIDELIELAINNK.

In terms of domain architecture, ATP-grasp spans 147–352; it reads KYVLENFKFK…YSALIDELIE (206 aa). 179–234 is an ATP binding site; sequence VEKLQYDVFIKPANSGSSVGITKAHNKEELLKGLEEAFIHDKNVLVEEAINAREIE. Asp305, Glu319, and Asn321 together coordinate Mg(2+).

Belongs to the D-alanine--D-alanine ligase family. Mg(2+) is required as a cofactor. Requires Mn(2+) as cofactor.

The protein localises to the cytoplasm. It carries out the reaction 2 D-alanine + ATP = D-alanyl-D-alanine + ADP + phosphate + H(+). It functions in the pathway cell wall biogenesis; peptidoglycan biosynthesis. In terms of biological role, cell wall formation. This chain is D-alanine--D-alanine ligase B, found in Clostridium tetani (strain Massachusetts / E88).